The sequence spans 158 residues: NADH-quinone oxidoreductase subunit B (158 aa).

Cysteine 37, cysteine 38, cysteine 102, and cysteine 132 together coordinate [4Fe-4S] cluster.

Belongs to the complex I 20 kDa subunit family. NDH-1 is composed of 14 different subunits. Subunits NuoB, C, D, E, F, and G constitute the peripheral sector of the complex. [4Fe-4S] cluster serves as cofactor.

The protein resides in the cell inner membrane. It carries out the reaction a quinone + NADH + 5 H(+)(in) = a quinol + NAD(+) + 4 H(+)(out). Its function is as follows. NDH-1 shuttles electrons from NADH, via FMN and iron-sulfur (Fe-S) centers, to quinones in the respiratory chain. The immediate electron acceptor for the enzyme in this species is believed to be ubiquinone. Couples the redox reaction to proton translocation (for every two electrons transferred, four hydrogen ions are translocated across the cytoplasmic membrane), and thus conserves the redox energy in a proton gradient. The polypeptide is NADH-quinone oxidoreductase subunit B (Thioalkalivibrio sulfidiphilus (strain HL-EbGR7)).